Here is a 198-residue protein sequence, read N- to C-terminus: Neutrophil gelatinase-associated lipocalin (198 aa).

The N-terminal stretch at 1–20 (MGLGVLCLALVLLGVLQSQA) is a signal peptide. A Pyrrolidone carboxylic acid modification is found at Q21. Position 72 to 74 (72 to 74 (YST)) interacts with a carboxymycobactin. The N-linked (GlcNAc...) asparagine glycan is linked to N85. A disulfide bridge links C96 with C195. An enterobactin-binding site is contributed by Y126. A carboxymycobactin is bound by residues K145, K154, and Y158. K154 lines the enterobactin pocket.

The protein belongs to the calycin superfamily. Lipocalin family. Monomer. Homodimer; disulfide-linked. Heterodimer; disulfide-linked with MMP9. As to expression, detected in the ureteric bud in embryonic kidney (at protein level).

The protein resides in the secreted. Its subcellular location is the cytoplasmic granule lumen. It localises to the cytoplasmic vesicle lumen. In terms of biological role, iron-trafficking protein involved in multiple processes such as apoptosis, innate immunity and renal development. Binds iron through association with 2,3-dihydroxybenzoic acid (2,3-DHBA), a siderophore that shares structural similarities with bacterial enterobactin, and delivers or removes iron from the cell, depending on the context. Iron-bound form (holo-24p3) is internalized following binding to the SLC22A17 (24p3R) receptor, leading to release of iron and subsequent increase of intracellular iron concentration. In contrast, association of the iron-free form (apo-24p3) with the SLC22A17 (24p3R) receptor is followed by association with an intracellular siderophore, iron chelation and iron transfer to the extracellular medium, thereby reducing intracellular iron concentration. Involved in apoptosis due to interleukin-3 (IL3) deprivation: iron-loaded form increases intracellular iron concentration without promoting apoptosis, while iron-free form decreases intracellular iron levels, inducing expression of the proapoptotic protein BCL2L11/BIM, resulting in apoptosis. Involved in innate immunity; limits bacterial proliferation by sequestering iron bound to microbial siderophores, such as enterobactin. Can also bind siderophores from M.tuberculosis. This Rattus norvegicus (Rat) protein is Neutrophil gelatinase-associated lipocalin (Lcn2).